A 596-amino-acid chain; its full sequence is Inactive metallocarboxypeptidase ecm14 (596 aa).

The first 26 residues, 1–26 (MSQSHSILSSLILLVAIIFCVPHVIA), serve as a signal peptide directing secretion. Residues 27-190 (VPWTTDGHAQ…SYPSMAYADA (164 aa)) constitute a propeptide that is removed on maturation. An N-linked (GlcNAc...) asparagine glycan is attached at N114. Positions 220–540 (NYQPLSVIIP…NVIKYFGDFL (321 aa)) constitute a Peptidase M14 domain. H285 and E288 together coordinate Zn(2+). Residues 285–288 (HARE), R343, and 360–361 (DR) each bind substrate. A disulfide bond links C354 and C376. The N-linked (GlcNAc...) asparagine glycan is linked to N400. H416 lines the Zn(2+) pocket. Substrate is bound at residue 417 to 418 (SY).

This sequence belongs to the peptidase M14 family. It depends on Zn(2+) as a cofactor.

The protein resides in the vacuole. The protein localises to the secreted. In terms of biological role, inactive carboxypeptidase that may play a role in cell wall organization and biogenesis. This is Inactive metallocarboxypeptidase ecm14 (ecm14) from Sclerotinia sclerotiorum (strain ATCC 18683 / 1980 / Ss-1) (White mold).